The primary structure comprises 97 residues: Aspartyl/glutamyl-tRNA(Asn/Gln) amidotransferase subunit C (97 aa).

It belongs to the GatC family. Heterotrimer of A, B and C subunits.

It catalyses the reaction L-glutamyl-tRNA(Gln) + L-glutamine + ATP + H2O = L-glutaminyl-tRNA(Gln) + L-glutamate + ADP + phosphate + H(+). It carries out the reaction L-aspartyl-tRNA(Asn) + L-glutamine + ATP + H2O = L-asparaginyl-tRNA(Asn) + L-glutamate + ADP + phosphate + 2 H(+). In terms of biological role, allows the formation of correctly charged Asn-tRNA(Asn) or Gln-tRNA(Gln) through the transamidation of misacylated Asp-tRNA(Asn) or Glu-tRNA(Gln) in organisms which lack either or both of asparaginyl-tRNA or glutaminyl-tRNA synthetases. The reaction takes place in the presence of glutamine and ATP through an activated phospho-Asp-tRNA(Asn) or phospho-Glu-tRNA(Gln). This chain is Aspartyl/glutamyl-tRNA(Asn/Gln) amidotransferase subunit C, found in Roseiflexus sp. (strain RS-1).